Reading from the N-terminus, the 280-residue chain is Large ribosomal subunit protein uL2 (280 aa).

Disordered regions lie at residues 1–59 (MAIR…GGHK) and 223–280 (GVVM…NKKR). 2 stretches are compositionally biased toward basic residues: residues 45 to 59 (VHGHITTRHKGGGHK) and 269 to 280 (VRRRRSNKNKKR).

The protein belongs to the universal ribosomal protein uL2 family. Part of the 50S ribosomal subunit. Forms a bridge to the 30S subunit in the 70S ribosome.

Functionally, one of the primary rRNA binding proteins. Required for association of the 30S and 50S subunits to form the 70S ribosome, for tRNA binding and peptide bond formation. It has been suggested to have peptidyltransferase activity; this is somewhat controversial. Makes several contacts with the 16S rRNA in the 70S ribosome. The protein is Large ribosomal subunit protein uL2 of Corynebacterium jeikeium (strain K411).